A 440-amino-acid polypeptide reads, in one-letter code: MKVQSLLRIETQLLLGRLLTRSGDQAWDFVVPFALLVIFPGKLQVAAFYYLIVKIGTFLLTPSSGKWIDTHPRIQVVKWGVWLQFFAILAGMVFFGMLDGLVRAGGRESWLLSVLFIALALSGVMASLGSQITDISVGNDLAPSLVAPEKLTHFNSWLRRIDLATEVGAPILAGALFAFHPEQLPLAGLFLIGLWNLVSFVPEYFLLRNVIQRSGLKIKVLTEAQSWKDTFHINLRGSFSDPIFWLILSYALLWLSVLSPHGVLLAAYLKDEMRLPETEIGLFRGLGAVFGLISTVSFPYLVRRLGLISSSRWHLGFQGVTLGIAVTAFAMGSTASVYVFLGCILLSRVGLYGFSNGEFELRQRLIPEGRRGELNSLSSLTTTSATLILFSAGSLLPQTEDFKYLVYVSLAAVLLANVVFIKWSSRQGVVTSGAAEPVES.

Residues 1 to 8 are Cytoplasmic-facing; it reads MKVQSLLR. Residues 9–38 form a helical membrane-spanning segment; it reads IETQLLLGRLLTRSGDQAWDFVVPFALLVI. Residue D24 coordinates Ca(2+). Residues 39 to 42 are Extracellular-facing; sequence FPGK. The chain crosses the membrane as a helical span at residues 43 to 69; that stretch reads LQVAAFYYLIVKIGTFLLTPSSGKWID. Residues 70 to 72 are Cytoplasmic-facing; it reads THP. Residues 73–103 form a helical membrane-spanning segment; sequence RIQVVKWGVWLQFFAILAGMVFFGMLDGLVR. Q84 serves as a coordination point for Ca(2+). Topologically, residues 104–109 are extracellular; sequence AGGRES. A helical membrane pass occupies residues 110–145; that stretch reads WLLSVLFIALALSGVMASLGSQITDISVGNDLAPSL. Residues 146-147 are Cytoplasmic-facing; that stretch reads VA. A helical transmembrane segment spans residues 148 to 176; it reads PEKLTHFNSWLRRIDLATEVGAPILAGAL. Over 177–186 the chain is Extracellular; the sequence is FAFHPEQLPL. Residues 187–213 form a helical membrane-spanning segment; sequence AGLFLIGLWNLVSFVPEYFLLRNVIQR. Ca(2+)-binding residues include N196 and E203. The Cytoplasmic portion of the chain corresponds to 214-242; sequence SGLKIKVLTEAQSWKDTFHINLRGSFSDP. Residues 243–271 traverse the membrane as a helical segment; it reads IFWLILSYALLWLSVLSPHGVLLAAYLKD. Over 272–276 the chain is Extracellular; that stretch reads EMRLP. Residues 277–304 form a helical membrane-spanning segment; that stretch reads ETEIGLFRGLGAVFGLISTVSFPYLVRR. Residues 305 to 306 are Cytoplasmic-facing; it reads LG. Residues 307–329 form a helical membrane-spanning segment; it reads LISSSRWHLGFQGVTLGIAVTAF. Over 330–335 the chain is Extracellular; it reads AMGSTA. A helical membrane pass occupies residues 336-365; the sequence is SVYVFLGCILLSRVGLYGFSNGEFELRQRL. The Cytoplasmic segment spans residues 366-370; the sequence is IPEGR. A helical transmembrane segment spans residues 371-395; sequence RGELNSLSSLTTTSATLILFSAGSL. Over 396 to 398 the chain is Extracellular; sequence LPQ. The chain crosses the membrane as a helical span at residues 399-424; sequence TEDFKYLVYVSLAAVLLANVVFIKWS. The Cytoplasmic portion of the chain corresponds to 425 to 440; it reads SRQGVVTSGAAEPVES.

This sequence belongs to the ferroportin (FP) (TC 2.A.100) family. It depends on Ca(2+) as a cofactor.

Its subcellular location is the cell membrane. Functionally, iron transpoter that exports Fe(2+) from the cell. Also binds to Co(2+) and Ni(2+). May act as a multivalent divalent metal transporter. The transporter is composed of 12 transmembrane (TM) helices organized into N-terminal (TM1-6) and C-terminal (TM7-12) domains. The substrate-binding site is formed at the interface of the two domains and is alternately accessible from either side of the membrane. The transport cycle is viewed as a series of ligand-induced conformational changes that include open outward and open inward states. This is Ferreportin (slc39) from Bdellovibrio bacteriovorus (strain ATCC 15356 / DSM 50701 / NCIMB 9529 / HD100).